The chain runs to 738 residues: Polyribonucleotide nucleotidyltransferase (738 aa).

Positions 514 and 520 each coordinate Mg(2+). A KH domain is found at 580–639 (PRIITVKIPVDKIGEVIGPKGKMINQIQEDTGAEITIEDDGTIYIGAQVGSQAEAARATI). The S1 motif domain maps to 651 to 723 (GERYLGTVVK…SRGKLSLIPV (73 aa)).

It belongs to the polyribonucleotide nucleotidyltransferase family. The cofactor is Mg(2+).

Its subcellular location is the cytoplasm. It catalyses the reaction RNA(n+1) + phosphate = RNA(n) + a ribonucleoside 5'-diphosphate. Involved in mRNA degradation. Catalyzes the phosphorolysis of single-stranded polyribonucleotides processively in the 3'- to 5'-direction. The sequence is that of Polyribonucleotide nucleotidyltransferase from Streptomyces avermitilis (strain ATCC 31267 / DSM 46492 / JCM 5070 / NBRC 14893 / NCIMB 12804 / NRRL 8165 / MA-4680).